A 424-amino-acid chain; its full sequence is Histidine--tRNA ligase (424 aa).

Belongs to the class-II aminoacyl-tRNA synthetase family. In terms of assembly, homodimer.

Its subcellular location is the cytoplasm. The catalysed reaction is tRNA(His) + L-histidine + ATP = L-histidyl-tRNA(His) + AMP + diphosphate + H(+). The polypeptide is Histidine--tRNA ligase (Salmonella arizonae (strain ATCC BAA-731 / CDC346-86 / RSK2980)).